We begin with the raw amino-acid sequence, 478 residues long: Protein nucleotidyltransferase YdiU (478 aa).

Glycine 84, glycine 86, arginine 87, lysine 107, aspartate 119, glycine 120, arginine 170, and arginine 177 together coordinate ATP. The Proton acceptor role is filled by aspartate 246. Mg(2+) contacts are provided by asparagine 247 and aspartate 256. Aspartate 256 is a binding site for ATP.

The protein belongs to the SELO family. Mg(2+) is required as a cofactor. The cofactor is Mn(2+).

It carries out the reaction L-seryl-[protein] + ATP = 3-O-(5'-adenylyl)-L-seryl-[protein] + diphosphate. It catalyses the reaction L-threonyl-[protein] + ATP = 3-O-(5'-adenylyl)-L-threonyl-[protein] + diphosphate. The enzyme catalyses L-tyrosyl-[protein] + ATP = O-(5'-adenylyl)-L-tyrosyl-[protein] + diphosphate. The catalysed reaction is L-histidyl-[protein] + UTP = N(tele)-(5'-uridylyl)-L-histidyl-[protein] + diphosphate. It carries out the reaction L-seryl-[protein] + UTP = O-(5'-uridylyl)-L-seryl-[protein] + diphosphate. It catalyses the reaction L-tyrosyl-[protein] + UTP = O-(5'-uridylyl)-L-tyrosyl-[protein] + diphosphate. In terms of biological role, nucleotidyltransferase involved in the post-translational modification of proteins. It can catalyze the addition of adenosine monophosphate (AMP) or uridine monophosphate (UMP) to a protein, resulting in modifications known as AMPylation and UMPylation. This is Protein nucleotidyltransferase YdiU from Escherichia coli O139:H28 (strain E24377A / ETEC).